Here is a 488-residue protein sequence, read N- to C-terminus: Ribulose bisphosphate carboxylase large chain (488 aa).

Positions 127 and 177 each coordinate substrate. The active-site Proton acceptor is the lysine 179. Lysine 181 provides a ligand contact to substrate. Mg(2+) is bound by residues lysine 205, aspartate 207, and glutamate 208. Lysine 205 bears the N6-carboxylysine mark. Residue histidine 297 is the Proton acceptor of the active site. Substrate is bound by residues arginine 298, histidine 330, and serine 382.

This sequence belongs to the RuBisCO large chain family. Type I subfamily. Heterohexadecamer of 8 large chains and 8 small chains. Requires Mg(2+) as cofactor.

The protein localises to the plastid. Its subcellular location is the chloroplast. The catalysed reaction is 2 (2R)-3-phosphoglycerate + 2 H(+) = D-ribulose 1,5-bisphosphate + CO2 + H2O. The enzyme catalyses D-ribulose 1,5-bisphosphate + O2 = 2-phosphoglycolate + (2R)-3-phosphoglycerate + 2 H(+). Its function is as follows. RuBisCO catalyzes two reactions: the carboxylation of D-ribulose 1,5-bisphosphate, the primary event in carbon dioxide fixation, as well as the oxidative fragmentation of the pentose substrate in the photorespiration process. Both reactions occur simultaneously and in competition at the same active site. The chain is Ribulose bisphosphate carboxylase large chain from Cyanidium caldarium (Red alga).